We begin with the raw amino-acid sequence, 889 residues long: Disease resistance protein RPS5 (889 aa).

Residue G2 is the site of N-myristoyl glycine attachment. A lipid anchor (S-palmitoyl cysteine) is attached at C4. The stretch at 29–58 (IHNLSKNLASLQKAMRMLKARQYDVIRRLE) forms a coiled coil. The region spanning 140–444 (SEATPFADVD…SEGFINEKEG (305 aa)) is the NB-ARC domain. Position 183–190 (183–190 (GMGGVGKT)) interacts with ATP. 6 LRR repeats span residues 518-539 (TVRKISLMNNEIEEIFDSHECA), 540-561 (ALTTLFLQKNDVVKISAEFFRC), 564-586 (HLVVLDLSENQSLNELPEEISEL), 588-610 (SLRYFNLSYTCIHQLPVGLWTLK), 611-633 (KLIHLNLEHMSSLGSILGISNLW), and 634-656 (NLRTLGLRDSRLLLDMSLVKELQ).

The protein belongs to the disease resistance NB-LRR family. As to quaternary structure, in uninfected plants, interacts with PBS1 through the coiled coil domain. Homodimer.

It is found in the cell membrane. In terms of biological role, disease resistance (R) protein that specifically recognizes the avrPphB type III effector avirulence protein from Pseudomonas syringae. Also confers resistance against Hyaloperonospora parasitica (downy mildew). Resistance proteins guard the plant against pathogens that contain an appropriate avirulence protein via an indirect interaction with this avirulence protein. That triggers a defense system including the hypersensitive response, which restricts the pathogen growth. Requires PBS1 to trigger the defense reaction against avrPphB. In case of infection by Pseudomonas syringae, AvrPphB triggers RPS5-mediated defense mechanism via the cleavage of PBS1, suggesting that the cleavage of PBS1 could trigger an exchange of ADP for ATP, thereby activating RPS5. May function as a fine-tuned sensor of alterations in the structure of the effector target PBS1. This is Disease resistance protein RPS5 (RPS5) from Arabidopsis thaliana (Mouse-ear cress).